The sequence spans 327 residues: Ribosomal RNA small subunit methyltransferase H (327 aa).

Residues 36–38 (GGH), D61, F88, D114, and Q121 each bind S-adenosyl-L-methionine.

This sequence belongs to the methyltransferase superfamily. RsmH family.

It is found in the cytoplasm. The catalysed reaction is cytidine(1402) in 16S rRNA + S-adenosyl-L-methionine = N(4)-methylcytidine(1402) in 16S rRNA + S-adenosyl-L-homocysteine + H(+). Specifically methylates the N4 position of cytidine in position 1402 (C1402) of 16S rRNA. In Chlorobium phaeovibrioides (strain DSM 265 / 1930) (Prosthecochloris vibrioformis (strain DSM 265)), this protein is Ribosomal RNA small subunit methyltransferase H.